Here is a 50-residue protein sequence, read N- to C-terminus: Sperm protamine P1 (50 aa).

Belongs to the protamine P1 family. As to expression, testis.

The protein resides in the nucleus. The protein localises to the chromosome. Protamines substitute for histones in the chromatin of sperm during the haploid phase of spermatogenesis. They compact sperm DNA into a highly condensed, stable and inactive complex. The sequence is that of Sperm protamine P1 (PRM1) from Trachypithecus phayrei (Phayre's leaf monkey).